A 285-amino-acid polypeptide reads, in one-letter code: RNase adapter protein RapZ (285 aa).

8–15 (GRSGSGKS) is an ATP binding site. 56-59 (DVRN) serves as a coordination point for GTP. The tract at residues 266-285 (RSRGKNVQSRHRTLEKRKPS) is RNA-binding.

This sequence belongs to the RapZ-like family. RapZ subfamily. Homotrimer.

Functionally, modulates the synthesis of GlmS, by affecting the processing and stability of the regulatory small RNA GlmZ. When glucosamine-6-phosphate (GlcN6P) concentrations are high in the cell, RapZ binds GlmZ and targets it to cleavage by RNase E. Consequently, GlmZ is inactivated and unable to activate GlmS synthesis. Under low GlcN6P concentrations, RapZ is sequestered and inactivated by an other regulatory small RNA, GlmY, preventing GlmZ degradation and leading to synthesis of GlmS. The polypeptide is RNase adapter protein RapZ (Pectobacterium atrosepticum (strain SCRI 1043 / ATCC BAA-672) (Erwinia carotovora subsp. atroseptica)).